Here is a 270-residue protein sequence, read N- to C-terminus: Putative pyruvate, phosphate dikinase regulatory protein (270 aa).

151–158 provides a ligand contact to ADP; sequence GVSRTSKT.

This sequence belongs to the pyruvate, phosphate/water dikinase regulatory protein family. PDRP subfamily.

The enzyme catalyses N(tele)-phospho-L-histidyl/L-threonyl-[pyruvate, phosphate dikinase] + ADP = N(tele)-phospho-L-histidyl/O-phospho-L-threonyl-[pyruvate, phosphate dikinase] + AMP + H(+). It carries out the reaction N(tele)-phospho-L-histidyl/O-phospho-L-threonyl-[pyruvate, phosphate dikinase] + phosphate + H(+) = N(tele)-phospho-L-histidyl/L-threonyl-[pyruvate, phosphate dikinase] + diphosphate. Functionally, bifunctional serine/threonine kinase and phosphorylase involved in the regulation of the pyruvate, phosphate dikinase (PPDK) by catalyzing its phosphorylation/dephosphorylation. The polypeptide is Putative pyruvate, phosphate dikinase regulatory protein (Bacillus velezensis (strain DSM 23117 / BGSC 10A6 / LMG 26770 / FZB42) (Bacillus amyloliquefaciens subsp. plantarum)).